Reading from the N-terminus, the 230-residue chain is tRNA (guanine-N(7)-)-methyltransferase (230 aa).

Glu-61, Glu-86, Asn-113, and Asp-136 together coordinate S-adenosyl-L-methionine. Asp-136 is a catalytic residue. Substrate contacts are provided by residues Lys-140, Asp-172, and 208-211 (TKYE).

This sequence belongs to the class I-like SAM-binding methyltransferase superfamily. TrmB family.

It catalyses the reaction guanosine(46) in tRNA + S-adenosyl-L-methionine = N(7)-methylguanosine(46) in tRNA + S-adenosyl-L-homocysteine. It participates in tRNA modification; N(7)-methylguanine-tRNA biosynthesis. Its function is as follows. Catalyzes the formation of N(7)-methylguanine at position 46 (m7G46) in tRNA. This is tRNA (guanine-N(7)-)-methyltransferase from Mycobacterium leprae (strain Br4923).